A 166-amino-acid polypeptide reads, in one-letter code: Small ribosomal subunit protein uS5 (166 aa).

Residues 11 to 74 (LQEKLIAVNR…EKARRNMINV (64 aa)) form the S5 DRBM domain.

This sequence belongs to the universal ribosomal protein uS5 family. Part of the 30S ribosomal subunit. Contacts proteins S4 and S8.

In terms of biological role, with S4 and S12 plays an important role in translational accuracy. Its function is as follows. Located at the back of the 30S subunit body where it stabilizes the conformation of the head with respect to the body. The chain is Small ribosomal subunit protein uS5 from Mannheimia succiniciproducens (strain KCTC 0769BP / MBEL55E).